A 158-amino-acid polypeptide reads, in one-letter code: Endoribonuclease YbeY (158 aa).

The Zn(2+) site is built by histidine 119, histidine 123, and histidine 129.

It belongs to the endoribonuclease YbeY family. Zn(2+) serves as cofactor.

Its subcellular location is the cytoplasm. Single strand-specific metallo-endoribonuclease involved in late-stage 70S ribosome quality control and in maturation of the 3' terminus of the 16S rRNA. In Shewanella sediminis (strain HAW-EB3), this protein is Endoribonuclease YbeY.